A 275-amino-acid chain; its full sequence is 3-methyl-2-oxobutanoate hydroxymethyltransferase (275 aa).

Mg(2+)-binding residues include Asp-49 and Asp-88. Residues 49–50, Asp-88, and Lys-118 each bind 3-methyl-2-oxobutanoate; that span reads DS. Glu-120 is a Mg(2+) binding site. The active-site Proton acceptor is Glu-187.

This sequence belongs to the PanB family. Homodecamer; pentamer of dimers. The cofactor is Mg(2+).

The protein resides in the cytoplasm. It catalyses the reaction 3-methyl-2-oxobutanoate + (6R)-5,10-methylene-5,6,7,8-tetrahydrofolate + H2O = 2-dehydropantoate + (6S)-5,6,7,8-tetrahydrofolate. It participates in cofactor biosynthesis; (R)-pantothenate biosynthesis; (R)-pantoate from 3-methyl-2-oxobutanoate: step 1/2. Catalyzes the reversible reaction in which hydroxymethyl group from 5,10-methylenetetrahydrofolate is transferred onto alpha-ketoisovalerate to form ketopantoate. The polypeptide is 3-methyl-2-oxobutanoate hydroxymethyltransferase (Hyphomonas neptunium (strain ATCC 15444)).